We begin with the raw amino-acid sequence, 274 residues long: NAD-dependent protein deacylase (274 aa).

The Deacetylase sirtuin-type domain maps to Cys4 to Pro274. Residue Gly29–Trp48 participates in NAD(+) binding. Substrate-binding residues include Tyr73 and Arg76. Gln111–Asp114 lines the NAD(+) pocket. His129 functions as the Proton acceptor in the catalytic mechanism. Zn(2+)-binding residues include Cys137, Cys140, Cys178, and Cys183. NAD(+) contacts are provided by residues Gly220 to Ser222, Asn246 to Glu248, and Cys264.

The protein belongs to the sirtuin family. Class III subfamily. The cofactor is Zn(2+).

The protein resides in the mitochondrion. The catalysed reaction is N(6)-malonyl-L-lysyl-[protein] + NAD(+) + H2O = 2''-O-malonyl-ADP-D-ribose + nicotinamide + L-lysyl-[protein]. It catalyses the reaction N(6)-succinyl-L-lysyl-[protein] + NAD(+) + H2O = 2''-O-succinyl-ADP-D-ribose + nicotinamide + L-lysyl-[protein]. The enzyme catalyses N(6)-glutaryl-L-lysyl-[protein] + NAD(+) + H2O = 2''-O-glutaryl-ADP-D-ribose + nicotinamide + L-lysyl-[protein]. In terms of biological role, NAD-dependent lysine demalonylase, desuccinylase and deglutarylase that specifically removes malonyl, succinyl and glutaryl groups on target proteins. Has weak NAD-dependent protein deacetylase activity; however this activity may not be physiologically relevant in vivo. The protein is NAD-dependent protein deacylase of Daphnia pulex (Water flea).